A 359-amino-acid chain; its full sequence is Cytohesin-interacting protein (359 aa).

One can recognise a PDZ domain in the interval 77–166; the sequence is LVTVEKQDNE…LLTIETLNGT (90 aa). The segment at 166 to 188 is interaction with CYTH1; the sequence is TMILKRTELEAKLQVLKQTLKQK. Residues 166–188 are a coiled coil; the sequence is TMILKRTELEAKLQVLKQTLKQK.

Interacts with CYTH1 and SNX27. In terms of tissue distribution, expressed in lymph nodes, thymus, spleen, lung, peripheral blood leukocytes and bone marrow.

It localises to the cytoplasm. It is found in the early endosome. In terms of biological role, by its binding to cytohesin-1 (CYTH1), it modifies activation of ARFs by CYTH1 and its precise function may be to sequester CYTH1 in the cytoplasm. This chain is Cytohesin-interacting protein (CYTIP), found in Homo sapiens (Human).